Reading from the N-terminus, the 233-residue chain is PEP2-like protein NECHADRAFT_97050 (233 aa).

It belongs to the PEP2 family.

May contribute to the ability of the fungus to cause disease on pea plants. In Fusarium vanettenii (strain ATCC MYA-4622 / CBS 123669 / FGSC 9596 / NRRL 45880 / 77-13-4) (Fusarium solani subsp. pisi), this protein is PEP2-like protein NECHADRAFT_97050.